We begin with the raw amino-acid sequence, 129 residues long: Small ribosomal subunit protein uS11 (129 aa).

The protein belongs to the universal ribosomal protein uS11 family. Part of the 30S ribosomal subunit. Interacts with proteins S7 and S18. Binds to IF-3.

Functionally, located on the platform of the 30S subunit, it bridges several disparate RNA helices of the 16S rRNA. Forms part of the Shine-Dalgarno cleft in the 70S ribosome. The chain is Small ribosomal subunit protein uS11 from Carboxydothermus hydrogenoformans (strain ATCC BAA-161 / DSM 6008 / Z-2901).